A 172-amino-acid polypeptide reads, in one-letter code: MASISLSSSTVPSLNSKESSGVSAFASRSISAVKFQFPVRRVRTGDLKFPSLSSTTRCTPRRIEAKKQTFDSFEDLLVNSDKPVLVDYYATWCGPCQFMVPILNEVSETLKDKIQVVKIDTEKYPSIANKYKIEALPTFILFKDGEPCDRFEGALTAKQLIQRIEDSLKVKP.

Residues 1-62 (MASISLSSST…SSTTRCTPRR (62 aa)) constitute a chloroplast transit peptide. The Thioredoxin domain occupies 63 to 169 (IEAKKQTFDS…LIQRIEDSLK (107 aa)). Residues Cys-93 and Cys-96 each act as nucleophile in the active site. Cys-93 and Cys-96 are disulfide-bonded.

Belongs to the thioredoxin family. Plant Y-type subfamily. In terms of tissue distribution, expressed in roots and seeds.

The protein localises to the plastid. It localises to the chloroplast stroma. Its function is as follows. Thiol-disulfide oxidoreductase that poorly activates chloroplastic malate dehydrogenase (NADP-MDH) and fructose-1,6-bisphosphatase. Provides reducing equivalents for peroxiredoxin Q. The protein is Thioredoxin Y1, chloroplastic of Arabidopsis thaliana (Mouse-ear cress).